Consider the following 197-residue polypeptide: Imidazoleglycerol-phosphate dehydratase (197 aa).

This sequence belongs to the imidazoleglycerol-phosphate dehydratase family.

The protein resides in the cytoplasm. It carries out the reaction D-erythro-1-(imidazol-4-yl)glycerol 3-phosphate = 3-(imidazol-4-yl)-2-oxopropyl phosphate + H2O. The protein operates within amino-acid biosynthesis; L-histidine biosynthesis; L-histidine from 5-phospho-alpha-D-ribose 1-diphosphate: step 6/9. The polypeptide is Imidazoleglycerol-phosphate dehydratase (Pseudomonas entomophila (strain L48)).